A 794-amino-acid polypeptide reads, in one-letter code: Furin (794 aa).

The first 26 residues, 1–26, serve as a signal peptide directing secretion; it reads MELRPWLLWVVAATGTLVLLAADAQG. The propeptide at 27–107 is inhibition peptide; it reads QKVFTNTWAV…QQVAKRRTKR (81 aa). Topologically, residues 108-715 are lumenal; sequence DVYQEPTDPK…AGLLPSHLPE (608 aa). Asp115 contacts Ca(2+). A Peptidase S8 domain is found at 121–435; it reads QWYLSGVTQR…YGLLDAGAMV (315 aa). Asp153 functions as the Charge relay system in the catalytic mechanism. Asp154 lines the substrate pocket. Residues Asp162, Asp174, Asp179, and Asp181 each coordinate Ca(2+). The interval 162-183 is disordered; sequence DLAGNYDPGASFDVNDQDPDPQ. 191–192 lines the substrate pocket; sequence DN. His194 (charge relay system) is an active-site residue. Ca(2+) is bound by residues Val205, Asn208, Val210, and Gly212. Disulfide bonds link Cys211–Cys360 and Cys303–Cys333. Substrate-binding positions include Glu236, 253 to 258, Asp264, and 292 to 295; these read SWGPED and ASGN. Residue Asp258 participates in Ca(2+) binding. Asp301 provides a ligand contact to Ca(2+). Positions 306 and 308 each coordinate substrate. Glu331 is a binding site for Ca(2+). Catalysis depends on Ser368, which acts as the Charge relay system. Ser368 is a substrate binding site. Residues Asn387 and Asn440 are each glycosylated (N-linked (GlcNAc...) asparagine). Positions 444-576 constitute a P/Homo B domain; it reads VAPQRKCIID…TLVLYGTAPE (133 aa). Cys450 and Cys474 are joined by a disulfide. Positions 498–500 match the Cell attachment site motif; it reads RGD. The N-linked (GlcNAc...) asparagine glycan is linked to Asn553. FU repeat units follow at residues 577 to 620 and 638 to 681; these read GLPV…GFAP and ASVC…QSQS. A disordered region spans residues 673–696; that stretch reads QTCSRQSQSSRESPPQQQPPRLPP. The segment covering 676-687 has biased composition (low complexity); it reads SRQSQSSRESPP. Residues 716–738 form a helical membrane-spanning segment; sequence VVAGLSCAFIVLVFVTVFLVLQL. The Cytoplasmic portion of the chain corresponds to 739-794; that stretch reads RSGFSFRGVKVYTMDRGLISYKGLPPEAWQEECPSDSEEDEGRGERTAFIKDQSAL. The segment at 759–762 is cell surface signal; the sequence is YKGL. Residues 767–780 show a composition bias toward acidic residues; the sequence is WQEECPSDSEEDEG. The tract at residues 767–794 is disordered; that stretch reads WQEECPSDSEEDEGRGERTAFIKDQSAL. Residues Ser773 and Ser775 each carry the phosphoserine; by CK2 modification. The short motif at 773–779 is the Trans Golgi network signal element; sequence SDSEEDE.

It belongs to the peptidase S8 family. Furin subfamily. As to quaternary structure, interacts with FLNA. Binds to PACS1 which mediates TGN localization and connection to clathrin adapters. Interacts with LAMP1, LAMP2 and LAMP3. The cofactor is Ca(2+). The inhibition peptide, which plays the role of an intramolecular chaperone, is autocatalytically removed in the endoplasmic reticulum (ER) and remains non-covalently bound to furin as a potent autoinhibitor. Following transport to the trans Golgi, a second cleavage within the inhibition propeptide results in propeptide dissociation and furin activation. In terms of processing, phosphorylation is required for TGN localization of the endoprotease. In vivo, exists as di-, mono- and non-phosphorylated forms. As to expression, seems to be expressed ubiquitously.

It is found in the golgi apparatus. Its subcellular location is the trans-Golgi network membrane. The protein localises to the cell membrane. It localises to the secreted. The protein resides in the endosome membrane. It carries out the reaction Release of mature proteins from their proproteins by cleavage of -Arg-Xaa-Yaa-Arg-|-Zaa- bonds, where Xaa can be any amino acid and Yaa is Arg or Lys. Releases albumin, complement component C3 and von Willebrand factor from their respective precursors.. Its activity is regulated as follows. Inhibited by the not secondly cleaved propeptide. Inhibited by m-guanidinomethyl-phenylacetyl-Arg-Val-Arg-(amidomethyl)-benzamidine (m-guanidinomethyl-Phac-RVR-Amb) and 4-guanidinomethyl-phenylacetyl-Arg-Tle-Arg-4-amidinobenzylamide (MI-1148). Inhibited by Decanoyl-Arg-Val-Lys-Arg-chloromethylketone (decanoyl-RVKR-CMK). Inhibited by heparin/heparan sulfate-binding. Ubiquitous endoprotease within constitutive secretory pathways capable of cleavage at the RX(K/R)R consensus motif. Mediates processing of TGFB1, an essential step in TGF-beta-1 activation. Converts through proteolytic cleavage the non-functional Brain natriuretic factor prohormone into its active hormone BNP(1-32). By mediating processing of accessory subunit ATP6AP1/Ac45 of the V-ATPase, regulates the acidification of dense-core secretory granules in islets of Langerhans cells. Functionally, (Microbial infection) Cleaves and activates diphtheria toxin DT. Its function is as follows. (Microbial infection) Cleaves and activates anthrax toxin protective antigen (PA). In terms of biological role, (Microbial infection) Cleaves and activates HIV-1 virus Envelope glycoprotein gp160. (Microbial infection) Required for H7N1 and H5N1 influenza virus infection probably by cleaving hemagglutinin. Functionally, (Microbial infection) Able to cleave S.pneumoniae serine-rich repeat protein PsrP. Its function is as follows. (Microbial infection) Facilitates human coronaviruses EMC and SARS-CoV-2 infections by proteolytically cleaving the spike protein at the monobasic S1/S2 cleavage site. This cleavage is essential for spike protein-mediated cell-cell fusion and entry into human lung cells. In terms of biological role, (Microbial infection) Facilitates mumps virus infection by proteolytically cleaving the viral fusion protein F. The sequence is that of Furin from Homo sapiens (Human).